Reading from the N-terminus, the 2748-residue chain is Nuclear migration protein NUM1 (2748 aa).

A compositionally biased stretch (basic residues) spans 1-10 (MSHNNRHKKN). Disordered regions lie at residues 1–36 (MSHNNRHKKNNDKDSSAGQYANSIDNSLSQESVSTN) and 290–312 (YYQKQHTSDTTVTSDPDSEGTTS). Over residues 17-36 (AGQYANSIDNSLSQESVSTN) the composition is skewed to polar residues. A compositionally biased stretch (low complexity) spans 293 to 304 (KQHTSDTTVTSD). Repeat copies occupy residues 593–656 (PSLE…KLEQ), 657–727 (PSLE…EVEQ), 728–798 (PSLA…EVEQ), 799–862 (PSLA…KLEQ), 863–926 (PSLA…KLEQ), 927–990 (PSLA…KLEQ), 991–1054 (PSLE…KLEQ), 1055–1118 (PSLE…KLEQ), 1119–1182 (PSLE…KLEQ), 1183–1246 (PSLA…KLEQ), 1247–1310 (PSLA…KLEQ), and 1311–1374 (PSLE…KLEQ). The interval 593 to 1384 (PSLEYLVEHA…PSLEYLVKHA (792 aa)) is 13 X tandem repeats. Phosphoserine occurs at positions 611, 675, and 746. Residues S881, S945, and S1009 each carry the phosphoserine modification. A phosphoserine mark is found at S1201, S1265, and S1329. The stretch at 1375–1384 (PSLEYLVKHA) is one 13; truncated repeat. The tract at residues 2111–2133 (ERAERIDEQSINTTSSNSTTTSS) is disordered. Low complexity predominate over residues 2122–2133 (NTTSSNSTTTSS). Phosphoserine is present on residues S2162, S2164, S2197, S2217, S2220, S2221, S2360, and S2424. Residues 2444-2460 (KEDKKGQATASKHEYVS) show a composition bias toward basic and acidic residues. The segment at 2444-2536 (KEDKKGQATA…HSSRNTPASR (93 aa)) is disordered. Over residues 2465–2474 (NKTSTVSTKS) the composition is skewed to polar residues. The segment covering 2492–2503 (SESHPQIEEQSH) has biased composition (basic and acidic residues). At S2494 the chain carries Phosphoserine. Residues 2504–2514 (RTNHHKHHKRQ) show a composition bias toward basic residues. Residues 2516-2532 (SLNSNSTSKTTHSSRNT) show a composition bias toward low complexity. Position 2545 is a phosphoserine (S2545). Residues 2573–2683 (QTVIGEYLFK…WYNSLRYLLQ (111 aa)) enclose the PH domain. The interval 2707 to 2748 (IFPLPGENTKSSSKRLSASRRSVSTRSLRHRVPQSRSFGNLR) is disordered. Residues 2720–2730 (KRLSASRRSVS) are compositionally biased toward low complexity.

As to quaternary structure, interacts with PAC11 when DYN1 is present, and TUB3.

Its subcellular location is the bud tip. Its function is as follows. Controls nuclear migration. NUM1 specifically controls the interaction of the bud neck cytoskeleton with the pre-divisional G2 nucleus. Functions in dynein-anchoring. During late anaphase forms dynein-interacting cortical microtubule capture sites at both cellular poles. This leads to dynein-dependent sliding of the microtubules in the bud. In Saccharomyces cerevisiae (strain ATCC 204508 / S288c) (Baker's yeast), this protein is Nuclear migration protein NUM1 (NUM1).